We begin with the raw amino-acid sequence, 264 residues long: Short chain dehydrogenase/reductase nsrJ (264 aa).

Residues I24, D70, N97, and R130 each coordinate NADP(+). Residues S146 and S147 each act as proton donor in the active site. Y161, K165, and T196 together coordinate NADP(+). Catalysis depends on Y161, which acts as the Proton acceptor. K165 (lowers pKa of active site Tyr) is an active-site residue.

Belongs to the short-chain dehydrogenases/reductases (SDR) family.

It participates in secondary metabolite biosynthesis. In terms of biological role, short chain dehydrogenase/reductase; part of the gene cluster that mediates the biosynthesis of the tetrahydroxanthone dimer neosartorin, which exhibits antibacterial activity. The two different monomeric units appear to be synthesized by the same set of enzymes, among which the Baeyer-Villiger monooxygenase nsrF is the key enzyme for the divergence of the biosynthetic routes. The pathway begins with the synthesis of atrochrysone thioester by the polyketide synthase nsrB. The atrochrysone carboxyl ACP thioesterase nsrC then breaks the thioester bond and releases the atrochrysone carboxylic acid from AacuL. Atrochrysone carboxylic acid is decarboxylated by the decarboxylase nsrE, and oxidized by the anthrone oxygenase nsrD to yield emodin. Emodin is then reduced to emodin hydroquinone by the oxidoreductase nsrR. A-ring reduction by the short chain dehydrogenase nsrJ, dehydration by the scytalone dehydratase-like protein nsrI and probable spontaneous re-oxidation, results in overall deoxygenation to chrysophanol. The Baeyer-Villiger monooxygenase nsrF accepts chrysophanol as a substrate to insert one oxygen atom at two different positions to yield the precursors of both monomric units. NsrF is promiscuous/flexible in interacting with the 2 (non methylated and methylated) aromatic rings of chrysophanol, thus diverging the biosynthetic pathway at this point. After the hydrolysis of the lactones, methylesterification by the methyltransferase nsrG yields respectively moniliphenone and 2,2',6'-trihydroxy-4-methyl-6-methoxya-cyldiphenylmethanone. The next steps are the hydroxylation by the FAD-dependent monooxygenase nsrK, followed by isomerization by the monooxygenase nsrQ. The short chain dehydrogenase/reductase nsrO then catalyzes the C-5 ketoreduction to give the xanthone skeleton of blennolide C and 5-acetylblennolide A. The acetyltransferase nsrL has a strict substrate specificity and uses only blennolide A but not blennolide C to yield 5-acetylblennolide A as the single-acetylated product. In the final step of the biosynthesis, the heterodimerization of the 2 xanthones, blennolide C and 5-acetylblennolide A, is catalyzed by the cytochrome P450 monooxygenase nsrP. NsrP can utilize at least three different xanthones as its substrates to perform the dimerization reaction. The polypeptide is Short chain dehydrogenase/reductase nsrJ (Aspergillus novofumigatus (strain IBT 16806)).